A 152-amino-acid chain; its full sequence is Transcriptional repressor NrdR (152 aa).

A zinc finger lies at 3 to 34; it reads CPKCTSIEDKVIDSRISKEGSTIRRRRECLEC. In terms of domain architecture, ATP-cone spans 49–139; the sequence is IVVIKRDGRR…VYKEFRDVSE (91 aa).

The protein belongs to the NrdR family. Zn(2+) serves as cofactor.

Negatively regulates transcription of bacterial ribonucleotide reductase nrd genes and operons by binding to NrdR-boxes. The polypeptide is Transcriptional repressor NrdR (Opitutus terrae (strain DSM 11246 / JCM 15787 / PB90-1)).